The primary structure comprises 214 residues: Phosphatidylserine decarboxylase proenzyme (214 aa).

The active-site Schiff-base intermediate with substrate; via pyruvic acid is Ser-183. A Pyruvic acid (Ser); by autocatalysis modification is found at Ser-183.

The protein belongs to the phosphatidylserine decarboxylase family. PSD-A subfamily. Heterodimer of a large membrane-associated beta subunit and a small pyruvoyl-containing alpha subunit. Pyruvate is required as a cofactor. Is synthesized initially as an inactive proenzyme. Formation of the active enzyme involves a self-maturation process in which the active site pyruvoyl group is generated from an internal serine residue via an autocatalytic post-translational modification. Two non-identical subunits are generated from the proenzyme in this reaction, and the pyruvate is formed at the N-terminus of the alpha chain, which is derived from the carboxyl end of the proenzyme. The post-translation cleavage follows an unusual pathway, termed non-hydrolytic serinolysis, in which the side chain hydroxyl group of the serine supplies its oxygen atom to form the C-terminus of the beta chain, while the remainder of the serine residue undergoes an oxidative deamination to produce ammonia and the pyruvoyl prosthetic group on the alpha chain.

Its subcellular location is the cell membrane. It catalyses the reaction a 1,2-diacyl-sn-glycero-3-phospho-L-serine + H(+) = a 1,2-diacyl-sn-glycero-3-phosphoethanolamine + CO2. It participates in phospholipid metabolism; phosphatidylethanolamine biosynthesis; phosphatidylethanolamine from CDP-diacylglycerol: step 2/2. Catalyzes the formation of phosphatidylethanolamine (PtdEtn) from phosphatidylserine (PtdSer). In Desulfotalea psychrophila (strain LSv54 / DSM 12343), this protein is Phosphatidylserine decarboxylase proenzyme.